The chain runs to 247 residues: 2,3-bisphosphoglycerate-dependent phosphoglycerate mutase (247 aa).

Substrate contacts are provided by residues 8-15, 21-22, arginine 60, 87-90, lysine 98, 114-115, and 183-184; these read RHGESTWN, TG, ERHY, RR, and GN. The active-site Tele-phosphohistidine intermediate is the histidine 9. Glutamate 87 acts as the Proton donor/acceptor in catalysis.

It belongs to the phosphoglycerate mutase family. BPG-dependent PGAM subfamily. In terms of assembly, homodimer.

The enzyme catalyses (2R)-2-phosphoglycerate = (2R)-3-phosphoglycerate. It participates in carbohydrate degradation; glycolysis; pyruvate from D-glyceraldehyde 3-phosphate: step 3/5. Catalyzes the interconversion of 2-phosphoglycerate and 3-phosphoglycerate. This Paracidovorax citrulli (strain AAC00-1) (Acidovorax citrulli) protein is 2,3-bisphosphoglycerate-dependent phosphoglycerate mutase.